A 194-amino-acid chain; its full sequence is Putative manganese efflux pump MntP (194 aa).

The next 6 membrane-spanning stretches (helical) occupy residues 2 to 22, 43 to 63, 67 to 87, 111 to 131, 137 to 157, and 174 to 194; these read ISII…AFAV, LWFG…ASTF, VTQF…GNMV, PLAV…AFMF, AFAI…GLHI, and GVVL…VIAF.

This sequence belongs to the MntP (TC 9.B.29) family.

The protein localises to the cell membrane. Probably functions as a manganese efflux pump. This is Putative manganese efflux pump MntP from Bifidobacterium longum (strain DJO10A).